Consider the following 312-residue polypeptide: Olfactory receptor-like protein COR5 (312 aa).

Topologically, residues 1-26 are extracellular; the sequence is MALGNCTTPTTFILSGLTDNPRLQMP. Asn-5 carries an N-linked (GlcNAc...) asparagine glycan. Residues 27 to 49 traverse the membrane as a helical segment; that stretch reads LFMVFLAIYTITLLANLGLIALI. Topologically, residues 50-57 are cytoplasmic; it reads SVDFHLQT. A helical membrane pass occupies residues 58–79; it reads PMYIFLQNLSFTDAAYSTVITP. Residues 80–100 lie on the Extracellular side of the membrane; it reads KMLATFLEERRTISYVGCILQ. Cys-97 and Cys-179 form a disulfide bridge. A helical transmembrane segment spans residues 101–120; the sequence is YFSFVLLTSSECLLLAVMAY. Residues 121–139 are Cytoplasmic-facing; it reads DRYVAICKPLLYPAIMTKA. Residues 140–164 form a helical membrane-spanning segment; the sequence is VCWRLVEGLYSLAFLNSLVHTSGLL. The Extracellular segment spans residues 165 to 205; that stretch reads KLSFCSSNVVNHFFCDNSPLFQISSSSTTLNELLVFIFGSW. The chain crosses the membrane as a helical span at residues 206–226; sequence FAMSSIITTPISYVFIILTVV. Residues 227 to 239 lie on the Cytoplasmic side of the membrane; sequence RIRSKDGKYKAFS. Residues 240–260 traverse the membrane as a helical segment; sequence TCTSHLMAVSLFHGTVIFMYL. The Extracellular segment spans residues 261–271; that stretch reads RPVKLFSLDTD. The helical transmembrane segment at 272-292 threads the bilayer; the sequence is KIASLFYTVVIPMLNPLIYSW. Topologically, residues 293–312 are cytoplasmic; it reads RNKEVKDALRRVIATNVWIH.

Belongs to the G-protein coupled receptor 1 family.

Its subcellular location is the cell membrane. Its function is as follows. Odorant receptor. This is Olfactory receptor-like protein COR5 (COR5) from Gallus gallus (Chicken).